A 94-amino-acid chain; its full sequence is Large ribosomal subunit protein bL27 (94 aa).

Positions 1 to 9 (MLKLNLQFF) are excised as a propeptide. Residues 13–32 (KGLGSTKNGRDSESKRLGAK) form a disordered region. The segment covering 20–32 (NGRDSESKRLGAK) has biased composition (basic and acidic residues).

This sequence belongs to the bacterial ribosomal protein bL27 family. The N-terminus is cleaved by ribosomal processing cysteine protease Prp.

The sequence is that of Large ribosomal subunit protein bL27 from Staphylococcus saprophyticus subsp. saprophyticus (strain ATCC 15305 / DSM 20229 / NCIMB 8711 / NCTC 7292 / S-41).